The chain runs to 108 residues: DNA-binding protein HBbu (108 aa).

This sequence belongs to the bacterial histone-like protein family.

Functionally, histone-like DNA-binding protein which is capable of wrapping DNA to stabilize it, and thus to prevent its denaturation under extreme environmental conditions. The chain is DNA-binding protein HBbu (hbb) from Borrelia parkeri.